The sequence spans 741 residues: Methionine--tRNA ligase (741 aa).

Polar residues predominate over residues 1–22; the sequence is MTMKQYTMSKMNAETQTQTRES. Residues 1–25 are disordered; that stretch reads MTMKQYTMSKMNAETQTQTRESFPT. The 'HIGH' region motif lies at 36–46; it reads PYANGDLHIGH. Zn(2+) is bound by residues cysteine 167, cysteine 170, cysteine 179, and cysteine 183. Residues 309–329 are disordered; sequence VRSHSSSSAKDSSEGNSPSNI. A compositionally biased stretch (low complexity) spans 311–329; it reads SHSSSSAKDSSEGNSPSNI. Threonine 381 is an ATP binding site. Residues 591–629 form a disordered region; it reads KLADRVTDPTDDDDSDTDTETGTDVAETTNESHSESNMT. The segment covering 599-611 has biased composition (acidic residues); the sequence is PTDDDDSDTDTET. A compositionally biased stretch (polar residues) spans 616-629; sequence AETTNESHSESNMT. A tRNA-binding domain is found at 643-741; it reads EFEELDLRVA…EDADPGTSIQ (99 aa).

This sequence belongs to the class-I aminoacyl-tRNA synthetase family. MetG type 1 subfamily. In terms of assembly, homodimer. It depends on Zn(2+) as a cofactor.

It localises to the cytoplasm. It catalyses the reaction tRNA(Met) + L-methionine + ATP = L-methionyl-tRNA(Met) + AMP + diphosphate. Functionally, is required not only for elongation of protein synthesis but also for the initiation of all mRNA translation through initiator tRNA(fMet) aminoacylation. This is Methionine--tRNA ligase from Haloquadratum walsbyi (strain DSM 16790 / HBSQ001).